We begin with the raw amino-acid sequence, 120 residues long: Large ribosomal subunit protein uL18 (120 aa).

The protein belongs to the universal ribosomal protein uL18 family. As to quaternary structure, part of the 50S ribosomal subunit; part of the 5S rRNA/L5/L18/L25 subcomplex. Contacts the 5S and 23S rRNAs.

This is one of the proteins that bind and probably mediate the attachment of the 5S RNA into the large ribosomal subunit, where it forms part of the central protuberance. The protein is Large ribosomal subunit protein uL18 of Staphylococcus saprophyticus subsp. saprophyticus (strain ATCC 15305 / DSM 20229 / NCIMB 8711 / NCTC 7292 / S-41).